A 327-amino-acid polypeptide reads, in one-letter code: Movement protein (327 aa).

Residues 297–327 adopt a coiled-coil conformation; the sequence is SASSSNTENELARVSQNIDLLKNKLKEICGE.

Belongs to the caulimoviridae movement protein family. In terms of assembly, homotrimer, through the coiled-coil domain. Interacts with VAP. May interact (via N-terminus) with host prenylated Rab acceptor protein 1D (PRA1D).

It localises to the host cell junction. It is found in the host plasmodesma. Transports viral genome to neighboring plant cells directly through plasmosdesmata, without any budding. The movement protein allows efficient cell to cell propagation, by bypassing the host cell wall barrier. Acts by forming tubules structures that increase the size exclusion limit (SEL) of plasmodesmata, thereby allowing viral ribonucleocapsids to spread directly to neighboring cells. The protein is Movement protein of Arabidopsis thaliana (Mouse-ear cress).